The sequence spans 176 residues: Large ribosomal subunit protein uL6 (176 aa).

The segment covering Pro153–Arg170 has biased composition (basic and acidic residues). The tract at residues Pro153–Lys176 is disordered.

Belongs to the universal ribosomal protein uL6 family. Part of the 50S ribosomal subunit.

Its function is as follows. This protein binds to the 23S rRNA, and is important in its secondary structure. It is located near the subunit interface in the base of the L7/L12 stalk, and near the tRNA binding site of the peptidyltransferase center. This is Large ribosomal subunit protein uL6 from Chromohalobacter salexigens (strain ATCC BAA-138 / DSM 3043 / CIP 106854 / NCIMB 13768 / 1H11).